We begin with the raw amino-acid sequence, 444 residues long: Spermidine/putrescine import ATP-binding protein PotA (444 aa).

The region spanning 11 to 332 is the ABC transporter domain; the sequence is ISLVDVDKEF…PVNKWVANFI (322 aa). 43 to 50 is a binding site for ATP; the sequence is GPSGSGKT. Residues 111–201 form an insert region; that stretch reads RIKKKAEEIP…ESFKKKYLTR (91 aa).

It belongs to the ABC transporter superfamily. Spermidine/putrescine importer (TC 3.A.1.11.1) family. The complex is composed of two ATP-binding proteins (PotA), two transmembrane proteins (PotB and PotC) and a solute-binding protein (PotD).

The protein resides in the cell membrane. The enzyme catalyses ATP + H2O + polyamine-[polyamine-binding protein]Side 1 = ADP + phosphate + polyamineSide 2 + [polyamine-binding protein]Side 1.. Its function is as follows. Part of the ABC transporter complex PotABCD involved in spermidine/putrescine import. Responsible for energy coupling to the transport system. In Mesomycoplasma hyopneumoniae (strain 232) (Mycoplasma hyopneumoniae), this protein is Spermidine/putrescine import ATP-binding protein PotA.